A 509-amino-acid chain; its full sequence is uncharacterized protein (509 aa).

A signal peptide spans 1–32; sequence MMLPKRNIIHFLRKRAIFIVAAFIALLTVDYS.

It localises to the endoplasmic reticulum. This is an uncharacterized protein from Schizosaccharomyces pombe (strain 972 / ATCC 24843) (Fission yeast).